Here is a 457-residue protein sequence, read N- to C-terminus: MALWGGRFTQAADQRFKQFNDSLRFDYRLAEQDIVGSVAWSKALVTVGVLTAEEQAQLEEALNVLLEDVRARPQQILESDAEDIHSWVEGKLIDKVGQLGKKLHTGRSRNDQVATDLKLWCKDTVSELLTANRQLQSVLVETAQNNQDAVMPGYTHLQRAQPVTFAHWCLAYVEMLARDESRLQDALKRLDVSPLGCGALAGTAYEIDREQLAGWLGFASATRNSLDSVSDRDHVLELLSAAAIGMVHLSRFAEDLIFFNTGEAGFVELSDRVTSGSSLMPQKKNPDALELIRGKCGRVQGALTGMMMTLKGLPLAYNKDMQEDKEGLFDALDTWLDCLHMAALVLDGIQVKRPRCQEAAQQGYANATELADYLVAKGVPFREAHHIVGEAVVEAIRQGKPLEDLPLDELQKFSPVIGEDVYPILSLQSCLDKRAAKGGVSPQQVAQAIAFAQARLG.

This sequence belongs to the lyase 1 family. Argininosuccinate lyase subfamily.

Its subcellular location is the cytoplasm. The enzyme catalyses 2-(N(omega)-L-arginino)succinate = fumarate + L-arginine. It participates in amino-acid biosynthesis; L-arginine biosynthesis; L-arginine from L-ornithine and carbamoyl phosphate: step 3/3. The chain is Argininosuccinate lyase from Shigella dysenteriae serotype 1 (strain Sd197).